A 648-amino-acid chain; its full sequence is Macrolide export ATP-binding/permease protein MacB (648 aa).

The ABC transporter domain maps to 5–243 (LELKDIRRSY…AGGTEPVVNT (239 aa)). 41 to 48 (GASGSGKS) contacts ATP. 4 helical membrane passes run 273-293 (LLTMLGIIIGIASVVSIVVVG), 523-543 (LFMTLVAVISLVVGGIGVMNI), 576-596 (AVLVCLVGGALGITLSLLIAF), and 611-631 (PLALLLAFLCSTVTGILFGWL).

This sequence belongs to the ABC transporter superfamily. Macrolide exporter (TC 3.A.1.122) family. In terms of assembly, homodimer. Part of the tripartite efflux system MacAB-TolC, which is composed of an inner membrane transporter, MacB, a periplasmic membrane fusion protein, MacA, and an outer membrane component, TolC. The complex forms a large protein conduit and can translocate molecules across both the inner and outer membranes. Interacts with MacA.

It is found in the cell inner membrane. Part of the tripartite efflux system MacAB-TolC. MacB is a non-canonical ABC transporter that contains transmembrane domains (TMD), which form a pore in the inner membrane, and an ATP-binding domain (NBD), which is responsible for energy generation. Confers resistance against macrolides. The protein is Macrolide export ATP-binding/permease protein MacB of Escherichia coli O157:H7.